The chain runs to 783 residues: MDKKTLNTLEYNEIKNKIEKLCKSKLGKSIANKLEPMIEEDEIRQSLDETYEAMSMIYKFSNPPIYEIINVKASIMHVSKGGYIVPEVLLKIGQILNSVHDIKRYAGESDENYENCPMIMAMMDSLVEEPDLVATINNAIISEDEISDNASRNLARIRQTKRQKTENIRDKINSILSSNDQALQENIVTMRDDRYVIPVKVSHKSSFKGIVHDHSSSGQTVYIEPMEVVELNNELRMLEAEEREEIIRILKEISDRVYDVKDSIFVDQDVLSKLDFIFAKAKYAIEIDATNPKLNTNGYFNFKNARHPLLDKKKVVPISIYLGDDYNTLVITGPNTGGKTVTLKTVGLITLMAQSGILIPVDENSEVAIFDNIFTDIGDEQSIEQSLSTFSAHMKNIVHIVNNITFNSLVLFDELGAGTDPTEGAALAIAILRIFLYKSIRTIATTHYSQLKIFALTEKYVKNGSVEFDVNTLSPTYKLRIGIPGKSNAFEISRRLGLDDDIINNAKEILSQEDKDFEDVLSDIESKKKQIDEDKQRQLELKEDLLKLRDRYEKEIEKTKLEKEKIINEAKENANEIYMRAKEESRELINKLKFLEKESDARTVANDVENKFNKRIKKSSNKKLLNETSKKQKLQLGDEVEILGIEQQGTIVSEPDKKGDLLVQVGILKINANVKNLKKIKEKEVIQSSKSIKSIIKNKANSDIKSEIDLRGKNIEEAIYELDKYIDDCVIVGLKKVNIIHGKGTGMLRKGIREYLRSDKRVKKIEDAGYNEGGLGATFIYLK.

An ATP-binding site is contributed by 333–340 (GPNTGGKT). In terms of domain architecture, Smr spans 708–783 (IDLRGKNIEE…GLGATFIYLK (76 aa)).

This sequence belongs to the DNA mismatch repair MutS family. MutS2 subfamily. As to quaternary structure, homodimer. Binds to stalled ribosomes, contacting rRNA.

In terms of biological role, endonuclease that is involved in the suppression of homologous recombination and thus may have a key role in the control of bacterial genetic diversity. Functionally, acts as a ribosome collision sensor, splitting the ribosome into its 2 subunits. Detects stalled/collided 70S ribosomes which it binds and splits by an ATP-hydrolysis driven conformational change. Acts upstream of the ribosome quality control system (RQC), a ribosome-associated complex that mediates the extraction of incompletely synthesized nascent chains from stalled ribosomes and their subsequent degradation. Probably generates substrates for RQC. The protein is Endonuclease MutS2 of Finegoldia magna (strain ATCC 29328 / DSM 20472 / WAL 2508) (Peptostreptococcus magnus).